A 583-amino-acid chain; its full sequence is Aspartate--tRNA ligase (583 aa).

Glu-173 contributes to the L-aspartate binding site. The segment at 197–200 is aspartate; sequence QLFK. An L-aspartate-binding site is contributed by Arg-219. Residues 219–221 and Gln-228 each bind ATP; that span reads RDE. Residue His-444 participates in L-aspartate binding. Residue Glu-478 participates in ATP binding. Arg-485 lines the L-aspartate pocket. Position 530-533 (530-533) interacts with ATP; the sequence is GLDR.

Belongs to the class-II aminoacyl-tRNA synthetase family. Type 1 subfamily. Homodimer.

The protein resides in the cytoplasm. It carries out the reaction tRNA(Asp) + L-aspartate + ATP = L-aspartyl-tRNA(Asp) + AMP + diphosphate. In terms of biological role, catalyzes the attachment of L-aspartate to tRNA(Asp) in a two-step reaction: L-aspartate is first activated by ATP to form Asp-AMP and then transferred to the acceptor end of tRNA(Asp). In Azobacteroides pseudotrichonymphae genomovar. CFP2, this protein is Aspartate--tRNA ligase.